The sequence spans 37 residues: Large ribosomal subunit protein bL36 (37 aa).

The protein belongs to the bacterial ribosomal protein bL36 family.

This Geobacillus stearothermophilus (Bacillus stearothermophilus) protein is Large ribosomal subunit protein bL36 (rpmJ).